Consider the following 201-residue polypeptide: Protease (201 aa).

Catalysis depends on residues H56, D73, and C121.

Belongs to the peptidase C5 family. Interacts with protease cofactor pVI-C; this interaction is necessary for protease activation.

The protein resides in the virion. Its subcellular location is the host nucleus. It catalyses the reaction Cleaves proteins of the adenovirus and its host cell at two consensus sites: -Yaa-Xaa-Gly-Gly-|-Xaa- and -Yaa-Xaa-Gly-Xaa-|-Gly- (in which Yaa is Met, Ile or Leu, and Xaa is any amino acid).. Its activity is regulated as follows. Requires DNA and protease cofactor for maximal activation. Inside nascent virions, becomes partially activated by binding to the viral DNA, allowing it to cleave the cofactor that binds to the protease and fully activates it. Actin, like the viral protease cofactor, seems to act as a cofactor in the cleavage of cytokeratin 18 and of actin itself. In terms of biological role, cleaves viral precursor proteins (pTP, pIIIa, pVI, pVII, pVIII, and pX) inside newly assembled particles giving rise to mature virions. Protease complexed to its cofactor slides along the viral DNA to specifically locate and cleave the viral precursors. Mature virions have a weakened organization compared to the unmature virions, thereby facilitating subsequent uncoating. Without maturation, the particle lacks infectivity and is unable to uncoat. Late in adenovirus infection, in the cytoplasm, may participate in the cytoskeleton destruction. Cleaves host cell cytoskeletal keratins K7 and K18. The chain is Protease from Homo sapiens (Human).